The following is a 314-amino-acid chain: 3'-5' exoribonuclease YhaM (314 aa).

The region spanning 163 to 279 is the HD domain; sequence HVVSMLDLAK…LHYIDNLDAK (117 aa).

It belongs to the YhaM family.

Its function is as follows. Shows a 3'-5' exoribonuclease activity. The polypeptide is 3'-5' exoribonuclease YhaM (Bacillus cereus (strain AH820)).